We begin with the raw amino-acid sequence, 172 residues long: Auxin-responsive protein IAA30 (172 aa).

The segment covering 1-18 (MGRGRSSSSSSIESSCKS) has biased composition (low complexity). The interval 1 to 28 (MGRGRSSSSSSIESSCKSNPFGVSSSNT) is disordered. The short motif at 35-39 (LRLGL) is the EAR-like (transcriptional repression) element. In terms of domain architecture, PB1 spans 82-171 (SFYVKVNMEG…RRLKISRAYH (90 aa)).

Belongs to the Aux/IAA family. Homodimers and heterodimers.

The protein localises to the nucleus. Its function is as follows. Aux/IAA proteins are short-lived transcriptional factors that function as repressors of early auxin response genes at low auxin concentrations. Repression is thought to result from the interaction with auxin response factors (ARFs), proteins that bind to the auxin-responsive promoter element (AuxRE). Formation of heterodimers with ARF proteins may alter their ability to modulate early auxin response genes expression. This Arabidopsis thaliana (Mouse-ear cress) protein is Auxin-responsive protein IAA30 (IAA30).